The following is a 165-amino-acid chain: UPF0303 protein Rleg2_2653 (165 aa).

It belongs to the UPF0303 family.

The sequence is that of UPF0303 protein Rleg2_2653 from Rhizobium leguminosarum bv. trifolii (strain WSM2304).